We begin with the raw amino-acid sequence, 595 residues long: Phenylalanine--tRNA ligase beta subunit (595 aa).

A 3'-CCA residue in tRNA region spans residues 86–90 (KLSKP). The B5 domain maps to 292 to 370 (FNDRIMDVSI…VGYGFNNLPK (79 aa)). Residues D348, D354, E357, and D358 each coordinate Mg(2+).

Belongs to the phenylalanyl-tRNA synthetase beta subunit family. Type 2 subfamily. In terms of assembly, tetramer of two alpha and two beta subunits. The cofactor is Mg(2+).

Its subcellular location is the cytoplasm. It carries out the reaction tRNA(Phe) + L-phenylalanine + ATP = L-phenylalanyl-tRNA(Phe) + AMP + diphosphate + H(+). In Saccharomyces cerevisiae (strain ATCC 204508 / S288c) (Baker's yeast), this protein is Phenylalanine--tRNA ligase beta subunit (FRS1).